Here is a 688-residue protein sequence, read N- to C-terminus: Chaperone protein dnaK1 (688 aa).

Threonine 198 carries the post-translational modification Phosphothreonine; by autocatalysis. Residues aspartate 630 to proline 661 are compositionally biased toward basic and acidic residues. The tract at residues aspartate 630–leucine 688 is disordered.

Belongs to the heat shock protein 70 family.

Acts as a chaperone. This chain is Chaperone protein dnaK1 (dnaK1), found in Nostoc sp. (strain PCC 7120 / SAG 25.82 / UTEX 2576).